We begin with the raw amino-acid sequence, 515 residues long: Envelope glycoprotein (515 aa).

The first 33 residues, 1–33 (MPKKRRSRRRPQPIIRWVSLTLTLLALCRPIQT), serve as a signal peptide directing secretion. Residues 34 to 435 (WRCSLSLGNQ…LGLTAWVRET (402 aa)) are Extracellular-facing. Residues asparagine 129 and asparagine 203 are each glycosylated (N-linked (GlcNAc...) asparagine; by host). The CXXC motif lies at 212-215 (CAIC). 3 disulfide bridges follow: cysteine 212–cysteine 215, cysteine 212–cysteine 392, and cysteine 384–cysteine 391. N-linked (GlcNAc...) asparagine; by host glycans are attached at residues asparagine 230, asparagine 251, asparagine 256, asparagine 271, and asparagine 287. A fusion peptide region spans residues 304–324 (VAALTLGLALSVGLTGINVAV). Coiled-coil stretches lie at residues 330-376 (QRLT…WLYI) and 388-420 (NEPCCFLRIQNDSIIRLGDLQPLSQRVSTDWQW). N-linked (GlcNAc...) asparagine; by host glycosylation is present at asparagine 351. The segment at 365 to 381 (AQNRRGLDWLYIRLGFQ) is immunosuppression. Residues 384 to 392 (CPTINEPCC) carry the CX6CC motif. Residue asparagine 398 is glycosylated (N-linked (GlcNAc...) asparagine; by host). A helical membrane pass occupies residues 436 to 456 (IHSVLSLFLLALFLLFLAPCL). Cysteine 455 carries the S-palmitoyl cysteine; by host lipid modification. Residues 457 to 515 (IKCLTSRLLKLLRQAPHFPEISLTPKPDSDYQALLPSAPEIYSHLSPVKPDYINLRPCP) are Cytoplasmic-facing.

The mature envelope protein (Env) consists of a trimer of SU-TM heterodimers attached by a labile interchain disulfide bond. Post-translationally, specific enzymatic cleavages in vivo yield mature proteins. Envelope glycoproteins are synthesized as an inactive precursor that is N-glycosylated and processed likely by host cell furin or by a furin-like protease in the Golgi to yield the mature SU and TM proteins. The cleavage site between SU and TM requires the minimal sequence [KR]-X-[KR]-R. The CXXC motif is highly conserved across a broad range of retroviral envelope proteins. It is thought to participate in the formation of a labile disulfide bond possibly with the CX6CC motif present in the transmembrane protein. Isomerization of the intersubunit disulfide bond to an SU intrachain disulfide bond is thought to occur upon receptor recognition in order to allow membrane fusion. In terms of processing, the transmembrane protein is palmitoylated.

The protein resides in the virion membrane. It localises to the host cell membrane. Functionally, the surface protein (SU) attaches the virus to the host cell by binding to its receptor. This interaction triggers the refolding of the transmembrane protein (TM) and is thought to activate its fusogenic potential by unmasking its fusion peptide. Fusion occurs at the host cell plasma membrane. In terms of biological role, the transmembrane protein (TM) acts as a class I viral fusion protein. Under the current model, the protein has at least 3 conformational states: pre-fusion native state, pre-hairpin intermediate state, and post-fusion hairpin state. During viral and target cell membrane fusion, the coiled coil regions (heptad repeats) assume a trimer-of-hairpins structure, positioning the fusion peptide in close proximity to the C-terminal region of the ectodomain. The formation of this structure appears to drive apposition and subsequent fusion of viral and target cell membranes. Membranes fusion leads to delivery of the nucleocapsid into the cytoplasm. The sequence is that of Envelope glycoprotein (env) from Bovine leukemia virus (isolate American FLK) (BLV).